Consider the following 423-residue polypeptide: Transcription factor bHLH14 (423 aa).

A disordered region spans residues 192 to 243 (GKTTKHTNQTGSYPKPAVSDHSKSGNQQFGSERKRRRKLETTRVAAATKEKH). Residues 245-294 (PAVLSHVEAEKQRREKLNHRFYALRAIVPKVSRMDKASLLSDAVSYIESL) enclose the bHLH domain. The disordered stretch occupies residues 312–343 (ETDKLDNSSSNTSPSSVEYQVNQKPSKSNRGS). A compositionally biased stretch (low complexity) spans 318 to 327 (NSSSNTSPSS). A compositionally biased stretch (polar residues) spans 328-342 (VEYQVNQKPSKSNRG).

In terms of assembly, homodimer.

Its subcellular location is the nucleus. The polypeptide is Transcription factor bHLH14 (BHLH14) (Arabidopsis thaliana (Mouse-ear cress)).